The primary structure comprises 390 residues: Phosphopentomutase (390 aa).

Mn(2+) is bound by residues D10, D284, H289, D325, H326, and H337.

The protein belongs to the phosphopentomutase family. Mn(2+) serves as cofactor.

The protein resides in the cytoplasm. It catalyses the reaction 2-deoxy-alpha-D-ribose 1-phosphate = 2-deoxy-D-ribose 5-phosphate. The enzyme catalyses alpha-D-ribose 1-phosphate = D-ribose 5-phosphate. It participates in carbohydrate degradation; 2-deoxy-D-ribose 1-phosphate degradation; D-glyceraldehyde 3-phosphate and acetaldehyde from 2-deoxy-alpha-D-ribose 1-phosphate: step 1/2. In terms of biological role, isomerase that catalyzes the conversion of deoxy-ribose 1-phosphate (dRib-1-P) and ribose 1-phosphate (Rib-1-P) to deoxy-ribose 5-phosphate (dRib-5-P) and ribose 5-phosphate (Rib-5-P), respectively. This is Phosphopentomutase from Clostridioides difficile (strain 630) (Peptoclostridium difficile).